The sequence spans 198 residues: Probable GTP-binding protein EngB (198 aa).

Positions S36 to E198 constitute an EngB-type G domain. GTP-binding positions include G44–S51, G70–L74, D88–G91, N155–D158, and I182–A184. S51 and T72 together coordinate Mg(2+).

This sequence belongs to the TRAFAC class TrmE-Era-EngA-EngB-Septin-like GTPase superfamily. EngB GTPase family. Requires Mg(2+) as cofactor.

Its function is as follows. Necessary for normal cell division and for the maintenance of normal septation. The protein is Probable GTP-binding protein EngB of Mesomycoplasma hyopneumoniae (strain 232) (Mycoplasma hyopneumoniae).